A 504-amino-acid chain; its full sequence is Glutamate--tRNA ligase (504 aa).

Positions 9-19 (PSPTGDPHVGT) match the 'HIGH' region motif. The 'KMSKS' region signature appears at 248–252 (KISKR). Lys-251 contributes to the ATP binding site.

Belongs to the class-I aminoacyl-tRNA synthetase family. Glutamate--tRNA ligase type 1 subfamily. As to quaternary structure, monomer.

It localises to the cytoplasm. It catalyses the reaction tRNA(Glu) + L-glutamate + ATP = L-glutamyl-tRNA(Glu) + AMP + diphosphate. In terms of biological role, catalyzes the attachment of glutamate to tRNA(Glu) in a two-step reaction: glutamate is first activated by ATP to form Glu-AMP and then transferred to the acceptor end of tRNA(Glu). This Acidothermus cellulolyticus (strain ATCC 43068 / DSM 8971 / 11B) protein is Glutamate--tRNA ligase.